The primary structure comprises 475 residues: Argininosuccinate lyase (475 aa).

This sequence belongs to the lyase 1 family. Argininosuccinate lyase subfamily.

It is found in the cytoplasm. It catalyses the reaction 2-(N(omega)-L-arginino)succinate = fumarate + L-arginine. It functions in the pathway amino-acid biosynthesis; L-arginine biosynthesis; L-arginine from L-ornithine and carbamoyl phosphate: step 3/3. This Streptomyces coelicolor (strain ATCC BAA-471 / A3(2) / M145) protein is Argininosuccinate lyase.